A 206-amino-acid chain; its full sequence is 3-isopropylmalate dehydratase small subunit (206 aa).

The protein belongs to the LeuD family. LeuD type 1 subfamily. As to quaternary structure, heterodimer of LeuC and LeuD.

It catalyses the reaction (2R,3S)-3-isopropylmalate = (2S)-2-isopropylmalate. Its pathway is amino-acid biosynthesis; L-leucine biosynthesis; L-leucine from 3-methyl-2-oxobutanoate: step 2/4. In terms of biological role, catalyzes the isomerization between 2-isopropylmalate and 3-isopropylmalate, via the formation of 2-isopropylmaleate. This Leptospira borgpetersenii serovar Hardjo-bovis (strain L550) protein is 3-isopropylmalate dehydratase small subunit.